Consider the following 269-residue polypeptide: 3-methyl-2-oxobutanoate hydroxymethyltransferase (269 aa).

2 residues coordinate Mg(2+): D50 and D89. 3-methyl-2-oxobutanoate is bound by residues 50-51 (DS), D89, and K118. Position 120 (E120) interacts with Mg(2+). E187 functions as the Proton acceptor in the catalytic mechanism.

It belongs to the PanB family. Homodecamer; pentamer of dimers. It depends on Mg(2+) as a cofactor.

Its subcellular location is the cytoplasm. The catalysed reaction is 3-methyl-2-oxobutanoate + (6R)-5,10-methylene-5,6,7,8-tetrahydrofolate + H2O = 2-dehydropantoate + (6S)-5,6,7,8-tetrahydrofolate. It functions in the pathway cofactor biosynthesis; (R)-pantothenate biosynthesis; (R)-pantoate from 3-methyl-2-oxobutanoate: step 1/2. Catalyzes the reversible reaction in which hydroxymethyl group from 5,10-methylenetetrahydrofolate is transferred onto alpha-ketoisovalerate to form ketopantoate. The chain is 3-methyl-2-oxobutanoate hydroxymethyltransferase from Nitrosomonas eutropha (strain DSM 101675 / C91 / Nm57).